Reading from the N-terminus, the 409-residue chain is tRNA(Met) cytidine acetate ligase (409 aa).

ATP-binding positions include 7 to 20 (VVEY…HLHH), Gly102, Asn169, and Arg194.

The protein belongs to the TmcAL family.

The protein localises to the cytoplasm. It catalyses the reaction cytidine(34) in elongator tRNA(Met) + acetate + ATP = N(4)-acetylcytidine(34) in elongator tRNA(Met) + AMP + diphosphate. In terms of biological role, catalyzes the formation of N(4)-acetylcytidine (ac(4)C) at the wobble position of elongator tRNA(Met), using acetate and ATP as substrates. First activates an acetate ion to form acetyladenylate (Ac-AMP) and then transfers the acetyl group to tRNA to form ac(4)C34. This Clostridium botulinum (strain Loch Maree / Type A3) protein is tRNA(Met) cytidine acetate ligase.